Reading from the N-terminus, the 90-residue chain is Probable Fe(2+)-trafficking protein (90 aa).

This sequence belongs to the Fe(2+)-trafficking protein family.

Its function is as follows. Could be a mediator in iron transactions between iron acquisition and iron-requiring processes, such as synthesis and/or repair of Fe-S clusters in biosynthetic enzymes. The sequence is that of Probable Fe(2+)-trafficking protein from Vibrio parahaemolyticus serotype O3:K6 (strain RIMD 2210633).